The following is a 485-amino-acid chain: NADH-quinone oxidoreductase subunit N (485 aa).

14 consecutive transmembrane segments (helical) span residues 8 to 28 (LIALLPLLIVGLTVVVVMLSI), 35 to 55 (FLNATLSVIGLNAALVSLWFV), 71 to 91 (GFAMLYTGLVLLASLATCTFA), 105 to 125 (FYLLVLIAALGGILLANANHL), 127 to 147 (SLFLGIELISLPLFGLVGYAF), 159 to 179 (YTILSAAASSFLLFGMALVYA), 203 to 223 (LLAGFGLMIVGLGFKLSLVPF), 235 to 255 (PAPVSTFLATASKIAIFGVVM), 271 to 291 (VVLAIIAFASIIFGNLMALSQ), 297 to 317 (LLGYSSISHLGYLLVALIALQ), 326 to 346 (VGVYLAGYLFSSLGAFGVVSL), 373 to 393 (AAVMTVMMLSLAGIPMTLGFI), 408 to 430 (WWLVGAVVVGSAIGLYYYLRVAV), and 455 to 475 (IVVLISALLVLVLGVWPQPLI).

The protein belongs to the complex I subunit 2 family. As to quaternary structure, NDH-1 is composed of 13 different subunits. Subunits NuoA, H, J, K, L, M, N constitute the membrane sector of the complex.

The protein localises to the cell inner membrane. It catalyses the reaction a quinone + NADH + 5 H(+)(in) = a quinol + NAD(+) + 4 H(+)(out). Functionally, NDH-1 shuttles electrons from NADH, via FMN and iron-sulfur (Fe-S) centers, to quinones in the respiratory chain. The immediate electron acceptor for the enzyme in this species is believed to be ubiquinone. Couples the redox reaction to proton translocation (for every two electrons transferred, four hydrogen ions are translocated across the cytoplasmic membrane), and thus conserves the redox energy in a proton gradient. This Escherichia coli (strain ATCC 8739 / DSM 1576 / NBRC 3972 / NCIMB 8545 / WDCM 00012 / Crooks) protein is NADH-quinone oxidoreductase subunit N.